A 306-amino-acid chain; its full sequence is Porphobilinogen deaminase (306 aa).

C239 is modified (S-(dipyrrolylmethanemethyl)cysteine).

This sequence belongs to the HMBS family. Monomer. The cofactor is dipyrromethane.

The catalysed reaction is 4 porphobilinogen + H2O = hydroxymethylbilane + 4 NH4(+). Its pathway is porphyrin-containing compound metabolism; protoporphyrin-IX biosynthesis; coproporphyrinogen-III from 5-aminolevulinate: step 2/4. Functionally, tetrapolymerization of the monopyrrole PBG into the hydroxymethylbilane pre-uroporphyrinogen in several discrete steps. This Helicobacter pylori (strain Shi470) protein is Porphobilinogen deaminase.